The primary structure comprises 153 residues: Small heat shock protein HspB (153 aa).

The region spanning 30–140 (AGTEDNYPPC…KPRRISISGS (111 aa)) is the sHSP domain.

It belongs to the small heat shock protein (HSP20) family.

The protein is Small heat shock protein HspB (hspB) of Bradyrhizobium diazoefficiens (strain JCM 10833 / BCRC 13528 / IAM 13628 / NBRC 14792 / USDA 110).